The chain runs to 350 residues: MDINLFDFHLPEELIAQVPLEERETSRLMVLDRETGDIEHKHFTDILSYLHEGDCLVLNETKVMPARLHGVKEDTGAHIEVLLLKQEEGDKWETLVKPAKRVKEGTVISFGEGKLKATCTGTADQGGRQLEFSYDGIFYEILDELGEMPLPPYIKETLEDRDRYQTVYAKEIGSAAAPTAGLHFTEELLEKLKQKGVELAFITLHVGLGTFRPVSADTIEEHHMHAEYYHMSEETAALLNRVKENGGRIITVGTTSTRTLETIATDHNGKLCAASGWTDIFMYPGYEFKAIDGLITNFHLPKSTLIMLVSAFANRDNVLHAYNEAVKEKYRFFSFGDAMFIASHAKMGNK.

It belongs to the QueA family. As to quaternary structure, monomer.

It is found in the cytoplasm. The enzyme catalyses 7-aminomethyl-7-carbaguanosine(34) in tRNA + S-adenosyl-L-methionine = epoxyqueuosine(34) in tRNA + adenine + L-methionine + 2 H(+). It participates in tRNA modification; tRNA-queuosine biosynthesis. Its function is as follows. Transfers and isomerizes the ribose moiety from AdoMet to the 7-aminomethyl group of 7-deazaguanine (preQ1-tRNA) to give epoxyqueuosine (oQ-tRNA). The chain is S-adenosylmethionine:tRNA ribosyltransferase-isomerase from Bacillus cereus (strain 03BB102).